A 209-amino-acid chain; its full sequence is Potassium-transporting ATPase KdpC subunit (209 aa).

A helical transmembrane segment spans residues 18-38 (ALALFVLLGLGLGYSLVATGI).

The protein belongs to the KdpC family. In terms of assembly, the system is composed of three essential subunits: KdpA, KdpB and KdpC.

The protein localises to the cell inner membrane. Part of the high-affinity ATP-driven potassium transport (or Kdp) system, which catalyzes the hydrolysis of ATP coupled with the electrogenic transport of potassium into the cytoplasm. This subunit acts as a catalytic chaperone that increases the ATP-binding affinity of the ATP-hydrolyzing subunit KdpB by the formation of a transient KdpB/KdpC/ATP ternary complex. The protein is Potassium-transporting ATPase KdpC subunit of Xanthomonas campestris pv. campestris (strain 8004).